Consider the following 192-residue polypeptide: UPF0316 protein SSP0880 (192 aa).

The next 3 membrane-spanning stretches (helical) occupy residues 8-28, 40-60, and 66-86; these read PWLM…CLTM, VAAI…GMVM, and IQNV…GMKI.

It belongs to the UPF0316 family.

Its subcellular location is the cell membrane. The chain is UPF0316 protein SSP0880 from Staphylococcus saprophyticus subsp. saprophyticus (strain ATCC 15305 / DSM 20229 / NCIMB 8711 / NCTC 7292 / S-41).